The chain runs to 327 residues: tRNA uridine(34) hydroxylase (327 aa).

The Rhodanese domain occupies S123 to S217. C177 acts as the Cysteine persulfide intermediate in catalysis.

The protein belongs to the TrhO family.

It catalyses the reaction uridine(34) in tRNA + AH2 + O2 = 5-hydroxyuridine(34) in tRNA + A + H2O. Functionally, catalyzes oxygen-dependent 5-hydroxyuridine (ho5U) modification at position 34 in tRNAs. The sequence is that of tRNA uridine(34) hydroxylase from Shewanella pealeana (strain ATCC 700345 / ANG-SQ1).